Consider the following 104-residue polypeptide: Pyrimidine/purine nucleoside phosphorylase (104 aa).

Belongs to the nucleoside phosphorylase PpnP family.

The enzyme catalyses a purine D-ribonucleoside + phosphate = a purine nucleobase + alpha-D-ribose 1-phosphate. The catalysed reaction is adenosine + phosphate = alpha-D-ribose 1-phosphate + adenine. It carries out the reaction cytidine + phosphate = cytosine + alpha-D-ribose 1-phosphate. It catalyses the reaction guanosine + phosphate = alpha-D-ribose 1-phosphate + guanine. The enzyme catalyses inosine + phosphate = alpha-D-ribose 1-phosphate + hypoxanthine. The catalysed reaction is thymidine + phosphate = 2-deoxy-alpha-D-ribose 1-phosphate + thymine. It carries out the reaction uridine + phosphate = alpha-D-ribose 1-phosphate + uracil. It catalyses the reaction xanthosine + phosphate = alpha-D-ribose 1-phosphate + xanthine. Functionally, catalyzes the phosphorolysis of diverse nucleosides, yielding D-ribose 1-phosphate and the respective free bases. Can use uridine, adenosine, guanosine, cytidine, thymidine, inosine and xanthosine as substrates. Also catalyzes the reverse reactions. This is Pyrimidine/purine nucleoside phosphorylase from Geobacter sulfurreducens (strain ATCC 51573 / DSM 12127 / PCA).